The following is a 382-amino-acid chain: MTLAVLIVAAGKGTRAGGGLAKQWRPLAGRLVIDWTIEAFQRAGCGTIMVVRDPDNEHAIEALAPYPELLLADGGPSRSESVRNGLIALQEIGVERVLIHDAARPCVCPQVIQQVLDALDDTPAAAPGLAVTDALWTGADGHVTGTQDRSALFAAQTPQGFHFDAILAAHMRHDGTAADDVEVARQAGLAVRITPGDVNNIKITRPEDFSRAEHILRSTMDNIPDIRLGNGYDVHRFGPGDHVMLCGVQVPHERGLQGHSDADVGMHAVTDALYGAMAEGDIGRHFPPSDPQWKGAASDIFLRHAVELARSKGFTINNVDCTLVCEYPKVGPHAEAMRARMAEIMGMDMGRLSIKATTSERLGFTGRKEGIAALATATLVRA.

The interval 1 to 226 (MTLAVLIVAA…RSTMDNIPDI (226 aa)) is 2-C-methyl-D-erythritol 4-phosphate cytidylyltransferase. Positions 227-382 (RLGNGYDVHR…ALATATLVRA (156 aa)) are 2-C-methyl-D-erythritol 2,4-cyclodiphosphate synthase. A divalent metal cation-binding residues include Asp-233 and His-235. Residues 233–235 (DVH) and 259–260 (HS) contribute to the 4-CDP-2-C-methyl-D-erythritol 2-phosphate site. Residue His-267 participates in a divalent metal cation binding. Residues 281–283 (DIG), 357–360 (TTSE), Phe-364, and Arg-367 contribute to the 4-CDP-2-C-methyl-D-erythritol 2-phosphate site.

The protein in the N-terminal section; belongs to the IspD/TarI cytidylyltransferase family. IspD subfamily. This sequence in the C-terminal section; belongs to the IspF family. A divalent metal cation serves as cofactor.

The catalysed reaction is 2-C-methyl-D-erythritol 4-phosphate + CTP + H(+) = 4-CDP-2-C-methyl-D-erythritol + diphosphate. It carries out the reaction 4-CDP-2-C-methyl-D-erythritol 2-phosphate = 2-C-methyl-D-erythritol 2,4-cyclic diphosphate + CMP. It participates in isoprenoid biosynthesis; isopentenyl diphosphate biosynthesis via DXP pathway; isopentenyl diphosphate from 1-deoxy-D-xylulose 5-phosphate: step 2/6. The protein operates within isoprenoid biosynthesis; isopentenyl diphosphate biosynthesis via DXP pathway; isopentenyl diphosphate from 1-deoxy-D-xylulose 5-phosphate: step 4/6. Functionally, bifunctional enzyme that catalyzes the formation of 4-diphosphocytidyl-2-C-methyl-D-erythritol from CTP and 2-C-methyl-D-erythritol 4-phosphate (MEP) (IspD), and catalyzes the conversion of 4-diphosphocytidyl-2-C-methyl-D-erythritol 2-phosphate (CDP-ME2P) to 2-C-methyl-D-erythritol 2,4-cyclodiphosphate (ME-CPP) with a corresponding release of cytidine 5-monophosphate (CMP) (IspF). The sequence is that of Bifunctional enzyme IspD/IspF from Ruegeria sp. (strain TM1040) (Silicibacter sp.).